We begin with the raw amino-acid sequence, 486 residues long: Betaine aldehyde dehydrogenase (486 aa).

Residues threonine 23 and aspartate 90 each coordinate K(+). NAD(+) is bound at residue 147–149 (GAW). Catalysis depends on lysine 159, which acts as the Charge relay system. NAD(+)-binding positions include 173-176 (KPSE) and 226-229 (ESGT). A K(+)-binding site is contributed by leucine 241. The active-site Proton acceptor is glutamate 247. The NAD(+) site is built by glycine 249, cysteine 281, and glutamate 382. Cysteine 281 acts as the Nucleophile in catalysis. Cysteine 281 is subject to Cysteine sulfenic acid (-SOH). 2 residues coordinate K(+): lysine 452 and glycine 455. The active-site Charge relay system is the glutamate 459.

The protein belongs to the aldehyde dehydrogenase family. As to quaternary structure, dimer of dimers. Requires K(+) as cofactor.

It catalyses the reaction betaine aldehyde + NAD(+) + H2O = glycine betaine + NADH + 2 H(+). It functions in the pathway amine and polyamine biosynthesis; betaine biosynthesis via choline pathway; betaine from betaine aldehyde: step 1/1. Its function is as follows. Involved in the biosynthesis of the osmoprotectant glycine betaine. Catalyzes the irreversible oxidation of betaine aldehyde to the corresponding acid. In Vibrio vulnificus (strain YJ016), this protein is Betaine aldehyde dehydrogenase.